The sequence spans 279 residues: Oxygen-dependent coproporphyrinogen-III oxidase (279 aa).

Ser102 is a binding site for substrate. A divalent metal cation-binding residues include His106 and His116. His116 serves as the catalytic Proton donor. 118-120 (NTR) is a binding site for substrate. Residues His149 and His179 each contribute to the a divalent metal cation site. The tract at residues 244–279 (YVEFNLLYDRGTKFGLMTDGNVEAILMSLPPEVKFN) is important for dimerization.

This sequence belongs to the aerobic coproporphyrinogen-III oxidase family. Homodimer. A divalent metal cation serves as cofactor.

It is found in the cytoplasm. The enzyme catalyses coproporphyrinogen III + O2 + 2 H(+) = protoporphyrinogen IX + 2 CO2 + 2 H2O. It functions in the pathway porphyrin-containing compound metabolism; protoporphyrin-IX biosynthesis; protoporphyrinogen-IX from coproporphyrinogen-III (O2 route): step 1/1. In terms of biological role, involved in the heme biosynthesis. Catalyzes the aerobic oxidative decarboxylation of propionate groups of rings A and B of coproporphyrinogen-III to yield the vinyl groups in protoporphyrinogen-IX. This is Oxygen-dependent coproporphyrinogen-III oxidase from Rickettsia akari (strain Hartford).